The chain runs to 688 residues: Complement C1s-1 subcomponent (688 aa).

A signal peptide spans 1 to 15 (MWYLVLFSLLASFSA). The 115-residue stretch at 16 to 130 (EPTMHGEILS…TGFAAYYTAI (115 aa)) folds into the CUB 1 domain. 6 residues coordinate Ca(2+): E60, D68, D113, D131, V132, and E134. C65 and C83 are oxidised to a cystine. Residues 131–172 (DVNECTDFTDVPCSHFCNNFIGGYFCSCPPEYFLHDDMRNCG) enclose the EGF-like; calcium-binding domain. 3 disulfide bridges follow: C135-C147, C143-C156, and C158-C171. Ca(2+) is bound by residues N149, F150, and G153. N149 bears the (3R)-3-hydroxyasparagine mark. A glycan (N-linked (GlcNAc...) asparagine) is linked at N174. Cysteines 175 and 202 form a disulfide. The CUB 2 domain occupies 175–290 (CSGDVFTALI…KGWKLRYHGD (116 aa)). Ca(2+) contacts are provided by E226, D236, D275, G278, and Q279. A disulfide bridge connects residues C234 and C251. 2 consecutive Sushi domains span residues 292–356 (ISCP…KCQP) and 357–423 (VYCG…RCIP). 7 disulfides stabilise this stretch: C294/C341, C321/C354, C359/C403, C386/C421, C425/C549, C595/C618, and C627/C659. Residues 438-680 (IFGGQPAKIE…YVDWILKTMQ (243 aa)) form the Peptidase S1 domain. Catalysis depends on charge relay system residues H475 and D529. The active-site Charge relay system is S631.

This sequence belongs to the peptidase S1 family. In terms of assembly, core component of the complement C1 complex, a calcium-dependent complex composed of 1 molecule of the C1Q subcomplex, 2 molecules of C1R and 2 molecules of C1S. The C1Q subcomplex is composed 18 subunits: 3 chains of C1QA, C1QB, and C1QC trimerize to form 6 collagen-like triple helices connected to six globular ligand-recognition modules. Post-translationally, cleaved and activated by C1R to generate Complement C1s subcomponent heavy and light chains. In terms of processing, the iron and 2-oxoglutarate dependent 3-hydroxylation of aspartate and asparagine is (R) stereospecific within EGF domains. As to expression, specifically expressed in male reproductive tissues.

The protein resides in the secreted. Its subcellular location is the cell surface. It carries out the reaction Cleavage of Arg-|-Ala bond in complement component C4 to form C4a and C4b, and Lys(or Arg)-|-Lys bond in complement component C2 to form C2a and C2b: the 'classical' pathway C3 convertase.. Its activity is regulated as follows. Cleaved and activated by C1R. Immunoglobulin-binding promotes autoactivation of C1R, which results in the cleavage of the Arg-Ile bond in the catalytic domain. Inhibited by C1 inhibitor (SERPING1). Component of the complement C1 complex, a multiprotein complex that initiates the classical pathway of the complement system, a cascade of proteins that leads to phagocytosis and breakdown of pathogens and signaling that strengthens the adaptive immune system. C1S is activated following association of the C1 complex with immunoglobulins (IgG or IgM) complexed with antigens to form antigen-antibody complexes on the surface of pathogens. C1S is cleaved and activated by C1R to generate C1s subcomponent heavy and light chains. C1s subcomponent light chain then cleaves and activates C2 and C4, the next components of the classical complement pathway. In terms of biological role, serine protease component of the complement C1 complex, which catalyzes cleavage and activation of C2 and C4, the next components of the classical complement pathway. Also cleaves IGFBP5 and thereby inhibits the trophic effects of IGF1. The protein is Complement C1s-1 subcomponent of Mus musculus (Mouse).